Consider the following 428-residue polypeptide: UDP-N-acetylglucosamine 1-carboxyvinyltransferase 2 (428 aa).

22-23 (KN) provides a ligand contact to phosphoenolpyruvate. Arg-92 provides a ligand contact to UDP-N-acetyl-alpha-D-glucosamine. Cys-116 acts as the Proton donor in catalysis. Cys-116 bears the 2-(S-cysteinyl)pyruvic acid O-phosphothioketal mark. UDP-N-acetyl-alpha-D-glucosamine is bound by residues 121–125 (RPIDQ), Asp-304, and Ile-326.

This sequence belongs to the EPSP synthase family. MurA subfamily.

The protein localises to the cytoplasm. It carries out the reaction phosphoenolpyruvate + UDP-N-acetyl-alpha-D-glucosamine = UDP-N-acetyl-3-O-(1-carboxyvinyl)-alpha-D-glucosamine + phosphate. The protein operates within cell wall biogenesis; peptidoglycan biosynthesis. Functionally, cell wall formation. Adds enolpyruvyl to UDP-N-acetylglucosamine. This chain is UDP-N-acetylglucosamine 1-carboxyvinyltransferase 2, found in Shouchella clausii (strain KSM-K16) (Alkalihalobacillus clausii).